Consider the following 22-residue polypeptide: FIGSALKVLAGVLPSIVSWVKQ.

Gln-22 carries the post-translational modification Glutamine amide.

As to expression, expressed by the skin dorsal glands.

It is found in the secreted. The chain is Melittin-like peptide from Rana temporaria (European common frog).